The following is a 349-amino-acid chain: Glycerol-3-phosphate dehydrogenase [NAD(+)], cytoplasmic (349 aa).

Residues 10 to 15, Phe-41, and Phe-97 each bind NAD(+); that span reads GSGNWG. Lys-120 lines the substrate pocket. Ala-153 provides a ligand contact to NAD(+). Ser-154 carries the phosphoserine modification. The Proton acceptor role is filled by Lys-204. Arg-269 is a binding site for NAD(+). Residue 269 to 270 coordinates substrate; the sequence is RN. Lys-289 carries the post-translational modification N6-succinyllysine. Residues Lys-296 and Gln-298 each contribute to the NAD(+) site. Tyr-326 bears the Phosphotyrosine mark.

This sequence belongs to the NAD-dependent glycerol-3-phosphate dehydrogenase family. As to quaternary structure, homodimer. In terms of tissue distribution, expressed in liver (at protein level).

The protein resides in the cytoplasm. The enzyme catalyses sn-glycerol 3-phosphate + NAD(+) = dihydroxyacetone phosphate + NADH + H(+). Inhibited by zinc ions and sulfate. Has glycerol-3-phosphate dehydrogenase activity. The sequence is that of Glycerol-3-phosphate dehydrogenase [NAD(+)], cytoplasmic from Homo sapiens (Human).